The primary structure comprises 238 residues: Ras association domain-containing protein 3 (238 aa).

N-acetylserine is present on S2. Positions 26–48 are disordered; that stretch reads RAPQGKPRSGQQDVEKEKETHSY. Residues 38–48 are compositionally biased toward basic and acidic residues; the sequence is DVEKEKETHSY. The region spanning 79–186 is the Ras-associating domain; it reads YTGFIKVQME…TLSFVLREHE (108 aa). The region spanning 187–234 is the SARAH domain; sequence IGEWEAFSLPELQNFLRILDKEEDEQLQNLKRRYTAYRQKLEEALREV.

In terms of tissue distribution, widely expressed.

Its subcellular location is the cytoplasm. The protein localises to the cytoskeleton. The chain is Ras association domain-containing protein 3 (RASSF3) from Homo sapiens (Human).